The sequence spans 899 residues: Protein translocase subunit SecA (899 aa).

ATP is bound by residues Gln87, 105–109 (GEGKT), and Asp512. A disordered region spans residues 846–899 (MEEEQQQQAQKKIVFNLGEEPATAPQPARSKKSASRNDPCPCGSGKKYKKCCGK). 4 residues coordinate Zn(2+): Cys885, Cys887, Cys896, and Cys897.

This sequence belongs to the SecA family. In terms of assembly, monomer and homodimer. Part of the essential Sec protein translocation apparatus which comprises SecA, SecYEG and auxiliary proteins SecDF-YajC and YidC. Requires Zn(2+) as cofactor.

The protein resides in the cell inner membrane. The protein localises to the cytoplasm. It carries out the reaction ATP + H2O + cellular proteinSide 1 = ADP + phosphate + cellular proteinSide 2.. Functionally, part of the Sec protein translocase complex. Interacts with the SecYEG preprotein conducting channel. Has a central role in coupling the hydrolysis of ATP to the transfer of proteins into and across the cell membrane, serving as an ATP-driven molecular motor driving the stepwise translocation of polypeptide chains across the membrane. This is Protein translocase subunit SecA from Geobacter metallireducens (strain ATCC 53774 / DSM 7210 / GS-15).